The sequence spans 352 residues: Probable dual-specificity RNA methyltransferase RlmN (352 aa).

Catalysis depends on Glu-99, which acts as the Proton acceptor. Residues 105 to 325 (EGDRATLCIS…ESHGYTCTIR (221 aa)) form the Radical SAM core domain. An intrachain disulfide couples Cys-112 to Cys-336. Residues Cys-119, Cys-123, and Cys-126 each coordinate [4Fe-4S] cluster. Residues 164–165 (GE), Ser-196, 217–219 (SLH), and His-293 contribute to the S-adenosyl-L-methionine site. Cys-336 serves as the catalytic S-methylcysteine intermediate.

The protein belongs to the radical SAM superfamily. RlmN family. It depends on [4Fe-4S] cluster as a cofactor.

The protein localises to the cytoplasm. The catalysed reaction is adenosine(2503) in 23S rRNA + 2 reduced [2Fe-2S]-[ferredoxin] + 2 S-adenosyl-L-methionine = 2-methyladenosine(2503) in 23S rRNA + 5'-deoxyadenosine + L-methionine + 2 oxidized [2Fe-2S]-[ferredoxin] + S-adenosyl-L-homocysteine. It carries out the reaction adenosine(37) in tRNA + 2 reduced [2Fe-2S]-[ferredoxin] + 2 S-adenosyl-L-methionine = 2-methyladenosine(37) in tRNA + 5'-deoxyadenosine + L-methionine + 2 oxidized [2Fe-2S]-[ferredoxin] + S-adenosyl-L-homocysteine. Specifically methylates position 2 of adenine 2503 in 23S rRNA and position 2 of adenine 37 in tRNAs. This chain is Probable dual-specificity RNA methyltransferase RlmN, found in Porphyromonas gingivalis (strain ATCC 33277 / DSM 20709 / CIP 103683 / JCM 12257 / NCTC 11834 / 2561).